A 404-amino-acid chain; its full sequence is Imidazolonepropionase (404 aa).

Fe(3+)-binding residues include H70 and H72. The Zn(2+) site is built by H70 and H72. Residues R79, Y142, and H174 each coordinate 4-imidazolone-5-propanoate. Y142 provides a ligand contact to N-formimidoyl-L-glutamate. H234 contacts Fe(3+). Residue H234 coordinates Zn(2+). E237 serves as a coordination point for 4-imidazolone-5-propanoate. Fe(3+) is bound at residue D308. D308 serves as a coordination point for Zn(2+).

This sequence belongs to the metallo-dependent hydrolases superfamily. HutI family. It depends on Zn(2+) as a cofactor. Requires Fe(3+) as cofactor.

It localises to the cytoplasm. It carries out the reaction 4-imidazolone-5-propanoate + H2O = N-formimidoyl-L-glutamate. It participates in amino-acid degradation; L-histidine degradation into L-glutamate; N-formimidoyl-L-glutamate from L-histidine: step 3/3. Its function is as follows. Catalyzes the hydrolytic cleavage of the carbon-nitrogen bond in imidazolone-5-propanoate to yield N-formimidoyl-L-glutamate. It is the third step in the universal histidine degradation pathway. This Thermoplasma volcanium (strain ATCC 51530 / DSM 4299 / JCM 9571 / NBRC 15438 / GSS1) protein is Imidazolonepropionase.